Here is a 289-residue protein sequence, read N- to C-terminus: 4-diphosphocytidyl-2-C-methyl-D-erythritol kinase (289 aa).

Lys-10 is an active-site residue. 94–104 (PVAAGLAGGSS) is an ATP binding site. Asp-136 is a catalytic residue.

It belongs to the GHMP kinase family. IspE subfamily.

The catalysed reaction is 4-CDP-2-C-methyl-D-erythritol + ATP = 4-CDP-2-C-methyl-D-erythritol 2-phosphate + ADP + H(+). The protein operates within isoprenoid biosynthesis; isopentenyl diphosphate biosynthesis via DXP pathway; isopentenyl diphosphate from 1-deoxy-D-xylulose 5-phosphate: step 3/6. In terms of biological role, catalyzes the phosphorylation of the position 2 hydroxy group of 4-diphosphocytidyl-2C-methyl-D-erythritol. The sequence is that of 4-diphosphocytidyl-2-C-methyl-D-erythritol kinase from Bacillus cytotoxicus (strain DSM 22905 / CIP 110041 / 391-98 / NVH 391-98).